Here is a 270-residue protein sequence, read N- to C-terminus: NAD kinase (270 aa).

The active-site Proton acceptor is the Asp57. Residues 57–58 (DG), 125–126 (NE), Arg150, and Asn227 contribute to the NAD(+) site.

Belongs to the NAD kinase family. Requires a divalent metal cation as cofactor.

Its subcellular location is the cytoplasm. The catalysed reaction is NAD(+) + ATP = ADP + NADP(+) + H(+). Functionally, involved in the regulation of the intracellular balance of NAD and NADP, and is a key enzyme in the biosynthesis of NADP. Catalyzes specifically the phosphorylation on 2'-hydroxyl of the adenosine moiety of NAD to yield NADP. In Ureaplasma parvum serovar 3 (strain ATCC 700970), this protein is NAD kinase.